The primary structure comprises 325 residues: Ribose-phosphate pyrophosphokinase (325 aa).

Residues N45 to E47 and R104 to Q105 contribute to the ATP site. Positions 138 and 178 each coordinate Mg(2+). Residue K202 is part of the active site. D-ribose 5-phosphate-binding positions include R204, D230, and D234–T238.

This sequence belongs to the ribose-phosphate pyrophosphokinase family. Class I subfamily. As to quaternary structure, homohexamer. Mg(2+) serves as cofactor.

It localises to the cytoplasm. It catalyses the reaction D-ribose 5-phosphate + ATP = 5-phospho-alpha-D-ribose 1-diphosphate + AMP + H(+). Its pathway is metabolic intermediate biosynthesis; 5-phospho-alpha-D-ribose 1-diphosphate biosynthesis; 5-phospho-alpha-D-ribose 1-diphosphate from D-ribose 5-phosphate (route I): step 1/1. In terms of biological role, involved in the biosynthesis of the central metabolite phospho-alpha-D-ribosyl-1-pyrophosphate (PRPP) via the transfer of pyrophosphoryl group from ATP to 1-hydroxyl of ribose-5-phosphate (Rib-5-P). The chain is Ribose-phosphate pyrophosphokinase from Corynebacterium efficiens (strain DSM 44549 / YS-314 / AJ 12310 / JCM 11189 / NBRC 100395).